The following is a 289-amino-acid chain: ATP synthase subunit a (289 aa).

6 consecutive transmembrane segments (helical) span residues 43-63, 104-124, 160-180, 193-213, 232-252, and 259-279; these read AFHL…LLIF, IAPL…VDLI, FCVF…GGFI, IFVQ…TLIA, VFIL…GLGV, and AVFH…LTIV.

This sequence belongs to the ATPase A chain family. In terms of assembly, F-type ATPases have 2 components, CF(1) - the catalytic core - and CF(0) - the membrane proton channel. CF(1) has five subunits: alpha(3), beta(3), gamma(1), delta(1), epsilon(1). CF(0) has three main subunits: a(1), b(2) and c(9-12). The alpha and beta chains form an alternating ring which encloses part of the gamma chain. CF(1) is attached to CF(0) by a central stalk formed by the gamma and epsilon chains, while a peripheral stalk is formed by the delta and b chains.

Its subcellular location is the cell inner membrane. In terms of biological role, key component of the proton channel; it plays a direct role in the translocation of protons across the membrane. The sequence is that of ATP synthase subunit a from Pseudomonas putida (strain ATCC 47054 / DSM 6125 / CFBP 8728 / NCIMB 11950 / KT2440).